The chain runs to 158 residues: UPF0266 membrane protein YobD (158 aa).

3 helical membrane-spanning segments follow: residues 6 to 26 (LVLI…QFIM), 45 to 65 (IDSV…VTNH), and 67 to 87 (ALIT…IFWI).

Belongs to the UPF0266 family.

Its subcellular location is the cell inner membrane. The polypeptide is UPF0266 membrane protein YobD (Shigella boydii serotype 4 (strain Sb227)).